A 401-amino-acid chain; its full sequence is Argininosuccinate synthase (401 aa).

8-16 (AYSGGLDTS) is an ATP binding site. Residues Tyr-86 and Ser-91 each coordinate L-citrulline. An ATP-binding site is contributed by Gly-116. L-aspartate-binding residues include Thr-118, Asn-122, and Asp-123. Residue Asn-122 participates in L-citrulline binding. Positions 126, 175, 184, 260, and 272 each coordinate L-citrulline.

This sequence belongs to the argininosuccinate synthase family. Type 1 subfamily. Homotetramer.

The protein resides in the cytoplasm. The enzyme catalyses L-citrulline + L-aspartate + ATP = 2-(N(omega)-L-arginino)succinate + AMP + diphosphate + H(+). Its pathway is amino-acid biosynthesis; L-arginine biosynthesis; L-arginine from L-ornithine and carbamoyl phosphate: step 2/3. The protein is Argininosuccinate synthase of Clostridium kluyveri (strain ATCC 8527 / DSM 555 / NBRC 12016 / NCIMB 10680 / K1).